The chain runs to 237 residues: Exosome complex component Rrp4 (237 aa).

The S1 motif domain occupies 72–144; sequence GHIVVGKVVD…LSKDPVLTIK (73 aa). Positions 152–211 constitute a KH domain; sequence PRGTLVEIPPQKVPRVIGRRGSMVSMIEDLLGVKLIVGQNGRIVVVGDDPQRVEIAVLAV.

This sequence belongs to the RRP4 family. In terms of assembly, component of the archaeal exosome complex. Forms a trimer of Rrp4 and/or Csl4 subunits. The trimer associates with a hexameric ring-like arrangement composed of 3 Rrp41-Rrp42 heterodimers.

The protein localises to the cytoplasm. In terms of biological role, non-catalytic component of the exosome, which is a complex involved in RNA degradation. Increases the RNA binding and the efficiency of RNA degradation. Confers strong poly(A) specificity to the exosome. In Thermofilum pendens (strain DSM 2475 / Hrk 5), this protein is Exosome complex component Rrp4.